Here is a 196-residue protein sequence, read N- to C-terminus: Oplophorus-luciferin 2-monooxygenase catalytic subunit (196 aa).

A signal peptide spans 1–27; it reads MAYSTLFIIALTAVVTQASSTQKSNLT.

In terms of assembly, heterotetramer of a catalytic 19 kDa and a non-catalytic 35 kDa subunit.

It is found in the secreted. The enzyme catalyses coelenterazine + O2 = coelenteramide + hnu + CO2. Inhibited by micromolar Cu(2+). In terms of biological role, catalytic subunit of oplophorus-luciferin 2-monooxygenase. Oxidoreductase that converts coelenterazine (the oplophorus luciferin) to coelenteramide under emission of blue light with a maximum at 454 nm. Is also active with bisdeoxycoelenterazine. The chain is Oplophorus-luciferin 2-monooxygenase catalytic subunit from Oplophorus gracilirostris (Luminous shrimp).